The sequence spans 176 residues: Transmembrane protein 238 (176 aa).

Residues 1–21 (MAAASPVCGSQASAVGASSPP) form a disordered region. The Cytoplasmic segment spans residues 1-36 (MAAASPVCGSQASAVGASSPPAPAPAPAAGLGRCRM). A compositionally biased stretch (low complexity) spans 9–19 (GSQASAVGASS). The chain crosses the membrane as a helical span at residues 37–57 (ALLLAVALDVAGMAALLTGVF). The Extracellular segment spans residues 58–69 (AQLQVRGRDFGD). Residues 70-90 (LLIYSGALLVFLSLLGWILWY) traverse the membrane as a helical segment. Over 91 to 176 (TGNIEISRQE…GSVAAGTGSE (86 aa)) the chain is Cytoplasmic. Residues 124–135 (SAPATASPRTTA) show a composition bias toward low complexity. Positions 124 to 156 (SAPATASPRTTAGLRSARRANRAPQPSSSGSRR) are disordered. A Phosphoserine modification is found at Ser-175.

The protein localises to the membrane. In Mus musculus (Mouse), this protein is Transmembrane protein 238 (Tmem238).